The primary structure comprises 318 residues: tRNA methyltransferase 10 homolog B (318 aa).

The span at 1–10 shows a compositional bias: basic and acidic residues; it reads MDCKSEESAQ. Positions 1 to 105 are disordered; it reads MDCKSEESAQ…DPGNGTCPQH (105 aa). Polar residues predominate over residues 52–63; that stretch reads SPANSAVWSSKN. The span at 64–83 shows a compositional bias: basic residues; it reads MQRKQRHWERIVSSKKSKRK. The stretch at 72–93 forms a coiled coil; it reads ERIVSSKKSKRKQERERRKAKR. A compositionally biased stretch (basic and acidic residues) spans 84–96; the sequence is QERERRKAKRAED. The region spanning 114–311 is the SAM-dependent MTase TRM10-type domain; sequence TKEKLLEAKH…KGVSPGKGYV (198 aa).

This sequence belongs to the class IV-like SAM-binding methyltransferase superfamily. TRM10 family.

The catalysed reaction is guanosine(9) in tRNA + S-adenosyl-L-methionine = N(1)-methylguanosine(9) in tRNA + S-adenosyl-L-homocysteine + H(+). Functionally, S-adenosyl-L-methionine-dependent guanine N(1)-methyltransferase that catalyzes the formation of N(1)-methylguanine at position 9 (m1G9) in tRNAs. Probably not able to catalyze formation of N(1)-methyladenine at position 9 (m1A9) in tRNAs. This chain is tRNA methyltransferase 10 homolog B (Trmt10b), found in Mus musculus (Mouse).